Reading from the N-terminus, the 338-residue chain is Deoxyhypusine hydroxylase (338 aa).

HEAT-like PBS-type repeat units follow at residues 71-97, 104-130, 200-233, 238-264, and 271-298; these read LKHE…VLKD, CRHE…LKDD, QRYR…GLKD, FRHE…CLSN, and VRHE…FLND. 4 residues coordinate Fe cation: histidine 73, glutamate 74, histidine 106, and glutamate 107. Fe cation is bound by residues histidine 240, glutamate 241, histidine 273, and glutamate 274.

This sequence belongs to the deoxyhypusine hydroxylase family. The cofactor is Fe(2+).

It localises to the cytoplasm. It is found in the nucleus. It carries out the reaction [eIF5A protein]-deoxyhypusine + AH2 + O2 = [eIF5A protein]-hypusine + A + H2O. The protein operates within protein modification; eIF5A hypusination. Its function is as follows. Catalyzes the hydroxylation of the N(6)-(4-aminobutyl)-L-lysine intermediate to form hypusine, an essential post-translational modification only found in mature eIF-5A factor. This chain is Deoxyhypusine hydroxylase (lia1), found in Aspergillus niger (strain ATCC MYA-4892 / CBS 513.88 / FGSC A1513).